A 446-amino-acid chain; its full sequence is Putative hydrolase YbfO (446 aa).

A signal peptide spans 1-28 (MKRMIVRMTLPLLIVCLAFSSFSASARA).

In Bacillus subtilis (strain 168), this protein is Putative hydrolase YbfO (ybfO).